The sequence spans 276 residues: Rhamnulose-1-phosphate aldolase (276 aa).

The active site involves Glu117. Zn(2+)-binding residues include His141, His143, and His212.

Belongs to the aldolase class II family. RhaD subfamily. Homotetramer. The cofactor is Zn(2+).

The protein localises to the cytoplasm. The enzyme catalyses L-rhamnulose 1-phosphate = (S)-lactaldehyde + dihydroxyacetone phosphate. It functions in the pathway carbohydrate degradation; L-rhamnose degradation; glycerone phosphate from L-rhamnose: step 3/3. Functionally, catalyzes the reversible cleavage of L-rhamnulose-1-phosphate to dihydroxyacetone phosphate (DHAP) and L-lactaldehyde. This is Rhamnulose-1-phosphate aldolase from Enterobacter sp. (strain 638).